A 484-amino-acid chain; its full sequence is Phospholipase A1-Ialpha2, chloroplastic (484 aa).

The N-terminal 63 residues, 1 to 63, are a transit peptide targeting the chloroplast; sequence MALIQNPNMK…LAPVILNSPV (63 aa). The GXSXG motif lies at 295–299; it reads GHSMG. The active-site Acyl-ester intermediate is serine 297. Active-site charge relay system residues include aspartate 360 and histidine 411.

Belongs to the AB hydrolase superfamily. Lipase family. As to expression, ubiquitous. Highest expression in flowers and leaves.

Its subcellular location is the plastid. The protein resides in the chloroplast. The protein localises to the plastoglobule. The enzyme catalyses a 1,2-diacyl-3-O-[alpha-D-galactosyl-(1-&gt;6)-beta-D-galactosyl]-sn-glycerol + H2O = acyl-3-O-[alpha-D-galactosyl-(1-&gt;6)-beta-D-galactosyl]-sn-glycerol + a fatty acid + H(+). The catalysed reaction is a 1,2-diacyl-3-O-(beta-D-galactosyl)-sn-glycerol + H2O = an acyl-3-O-(beta-D-galactosyl)-sn-glycerol + a fatty acid + H(+). Its function is as follows. Acylhydrolase that catalyzes the hydrolysis of phosphatidylcholine at the sn-1 position. Has a strong galactolipase activity toward monogalactosyldiacylglycerol (MGDG) and digalactosyldiacylglycerol (DGDG). Low triacylglycerol (TAG) lipase activity. Plays a role in plant growth and in leaf senescence. This Arabidopsis thaliana (Mouse-ear cress) protein is Phospholipase A1-Ialpha2, chloroplastic.